Here is a 463-residue protein sequence, read N- to C-terminus: Probable glycosyltransferase 3 (463 aa).

Residues 1–20 (MAVTGGGRPAARQQAARGKQ) are disordered. The Cytoplasmic segment spans residues 1–24 (MAVTGGGRPAARQQAARGKQMQRT). Residues 9 to 20 (PAARQQAARGKQ) show a composition bias toward low complexity. A helical; Signal-anchor for type II membrane protein transmembrane segment spans residues 25 to 47 (FNNVKITLICGFITLLVLRGTVG). The Lumenal portion of the chain corresponds to 48–463 (INLLTYGVGG…ALKMDAKIES (416 aa)). The interval 82–125 (EIRSDTDDDDDDEEEEPLGVDASTTTTTNSTTTTATAARRRSSN) is disordered. The segment covering 87–99 (TDDDDDDEEEEPL) has biased composition (acidic residues). Residues 103 to 118 (ASTTTTTNSTTTTATA) are compositionally biased toward low complexity. Residues N110, N125, and N442 are each glycosylated (N-linked (GlcNAc...) asparagine).

The protein belongs to the glycosyltransferase 34 family.

It is found in the golgi apparatus membrane. Its function is as follows. Probable glycosyltransferase that may be involved in the biosynthesis of xyloglucan. The protein is Probable glycosyltransferase 3 of Oryza sativa subsp. indica (Rice).